The following is a 468-amino-acid chain: MTMAGQTINDRLLAARHSLAGQGLAKSVCKATTEECIGPKKKHLDYLVHCTNEPNVSIPHLANLLIERSQNANWVVVYKSLITTHHLMAYGNERFMQYLASSNSTFNLSSFLDKGTVQDGGMGVPGGRMGYDMSPFIRRYAKYLNEKSLSYRAMAFDFCKVKRGKEEGSLRSMNAEKLLKTLPVLQAQLDALLEFDCQSNDLSNGVINMSFMLLFRDLIRLFACYNDGIINLLEKYFDMNKKHARDALDLYKKFLVRMDRVGEFLKVAENVGIDKGDIPDLTKAPSSLLDALEQHLATLEGRKVSAANTPTQSSSSAFGTAAASSKFDTTNGIDEQLKAQVLAEEEAAMNQYKSKVSSPTSSGAAGASAALTNPFLSSPPAAQAGQPIVDLFGAASAQPAAAAAATKASDDLLQLGNPFADMFDASGGGAAAVGATGNAGDGTAKYDGGAGSSPFDWGATDDDGGAAQ.

The ENTH domain maps to 16–158; the sequence is RHSLAGQGLA…LSYRAMAFDF (143 aa). Residues 438–468 form a disordered region; sequence NAGDGTAKYDGGAGSSPFDWGATDDDGGAAQ. Over residues 459-468 the composition is skewed to acidic residues; it reads ATDDDGGAAQ.

The protein belongs to the PICALM/SNAP91 family. As to quaternary structure, binds clathrin and phosphatidylinositol 4,5-bisphosphate. As to expression, in embryos, expression is seen in central and peripheral nervous systems (brain and ventral nerve cord) and Garland cells. Coexpressed with clathrin at presynaptic boutons of neuromuscular junctions.

It is found in the membrane. It localises to the clathrin-coated pit. The protein localises to the golgi apparatus. The protein resides in the cytoplasmic vesicle. Its subcellular location is the clathrin-coated vesicle. Its function is as follows. Assembly protein recruiting clathrin and adaptor protein complex 2 (AP2) to cell membranes at sites of coated-pit formation and clathrin-vesicle assembly. May be required to determine the amount of membrane to be recycled, possibly by regulating the size of the clathrin cage. Involved in AP2-dependent clathrin-mediated endocytosis at the neuromuscular junction. The polypeptide is Phosphatidylinositol-binding clathrin assembly protein LAP (lap) (Drosophila melanogaster (Fruit fly)).